We begin with the raw amino-acid sequence, 464 residues long: F-box/WD repeat-containing protein 12 (464 aa).

In terms of domain architecture, F-box spans 1–45 (MEIRLPDLALKRIFSFLDLFGLLQVSQVNKHWNRIADSDYLWRSL). WD repeat units lie at residues 89–132 (YKVT…CAWD), 136–174 (GTMI…KVWN), 178–217 (RDAL…YTFT), 222–263 (RDVS…FLTE), 270–315 (EGSV…ITFD), 320–367 (KTGG…LLFS), 370–407 (GFLL…YMWE), and 416–461 (RSCC…VMYS).

Interacts with SKP1. Interacts with CUL1. Interacts with IL22RA1. Ubiquitously expressed.

The protein operates within protein modification; protein ubiquitination. Its function is as follows. Substrate-recognition component of the SCF (SKP1-CUL1-F-box protein)-type E3 ubiquitin ligase complex. Promotes degradation of interleukin-22 receptor subunit IL22RA1 in resting and IL22-stimulated conditions by facilitating its ubiquitination. Functions as a cell growth suppressor. The sequence is that of F-box/WD repeat-containing protein 12 (FBXW12) from Homo sapiens (Human).